Here is a 2931-residue protein sequence, read N- to C-terminus: Probable polyketide synthase 9/36 (2931 aa).

The Ketosynthase family 3 (KS3) domain maps to 11 to 442 (EKGVAIVGIG…GSNCCLLISE (432 aa)). Residues Cys181, His323, and His362 each act as for beta-ketoacyl synthase activity in the active site. The segment at 635–668 (GVNPSFILGHSLGEISASYCSGMIDLDTFCYTVY) is acyl/malonyl transferase. The active-site For acyl/malonyl transferase activity is Ser645. An N-terminal hotdog fold region spans residues 925-1047 (IDHLGTSNSY…ANFQLLDHGN (123 aa)). Positions 925 to 1209 (IDHLGTSNSY…CKSLIPIKDS (285 aa)) constitute a PKS/mFAS DH domain. His959 acts as the Proton acceptor; for dehydratase activity in catalysis. The segment at 1064–1209 (NLSKLTKNEL…CKSLIPIKDS (146 aa)) is C-terminal hotdog fold. Asp1122 functions as the Proton donor; for dehydratase activity in the catalytic mechanism. A helical membrane pass occupies residues 2293–2313 (LINFVMASSAISLIGSTDLCT). In terms of domain architecture, Carrier spans 2429–2506 (TGNKNIDELF…TSMKMILNSL (78 aa)). Ser2466 bears the O-(pantetheine 4'-phosphoryl)serine mark. The helical transmembrane segment at 2553–2573 (KIILLTGTTGFLGGFLLFNMV) threads the bilayer.

Pantetheine 4'-phosphate serves as cofactor.

The protein resides in the membrane. Its function is as follows. Probable polyketide synthase. The protein is Probable polyketide synthase 9/36 (pks9) of Dictyostelium discoideum (Social amoeba).